The sequence spans 210 residues: Large ribosomal subunit protein uL3 (210 aa).

The protein belongs to the universal ribosomal protein uL3 family. In terms of assembly, part of the 50S ribosomal subunit. Forms a cluster with proteins L14 and L19.

Its function is as follows. One of the primary rRNA binding proteins, it binds directly near the 3'-end of the 23S rRNA, where it nucleates assembly of the 50S subunit. This is Large ribosomal subunit protein uL3 from Amoebophilus asiaticus (strain 5a2).